The chain runs to 475 residues: Putative UDP-glucose glucosyltransferase (475 aa).

This sequence belongs to the UDP-glycosyltransferase family.

This is Putative UDP-glucose glucosyltransferase from Fragaria ananassa (Strawberry).